We begin with the raw amino-acid sequence, 319 residues long: ATP-dependent 6-phosphofructokinase (319 aa).

Position 11 (glycine 11) interacts with ATP. Position 21–25 (21–25) interacts with ADP; the sequence is RAVVR. Residues 72 to 73 and 102 to 105 contribute to the ATP site; these read RC and GEGS. Glutamate 103 provides a ligand contact to Mg(2+). 126–128 is a binding site for substrate; it reads TID. The active-site Proton acceptor is the aspartate 128. Residue lysine 155 coordinates ADP. Residues arginine 163 and 170–172 each bind substrate; that span reads MGR. ADP is bound by residues 186–188, arginine 212, and 214–216; these read GAE and KIN. Substrate is bound by residues glutamate 223, arginine 244, and 250 to 253; that span reads HVQR.

The protein belongs to the phosphofructokinase type A (PFKA) family. ATP-dependent PFK group I subfamily. Prokaryotic clade 'B1' sub-subfamily. In terms of assembly, homotetramer. Mg(2+) is required as a cofactor.

Its subcellular location is the cytoplasm. It catalyses the reaction beta-D-fructose 6-phosphate + ATP = beta-D-fructose 1,6-bisphosphate + ADP + H(+). It functions in the pathway carbohydrate degradation; glycolysis; D-glyceraldehyde 3-phosphate and glycerone phosphate from D-glucose: step 3/4. Allosterically activated by ADP and other diphosphonucleosides, and allosterically inhibited by phosphoenolpyruvate. Catalyzes the phosphorylation of D-fructose 6-phosphate to fructose 1,6-bisphosphate by ATP, the first committing step of glycolysis. This Thermotoga neapolitana (strain ATCC 49049 / DSM 4359 / NBRC 107923 / NS-E) protein is ATP-dependent 6-phosphofructokinase.